A 363-amino-acid chain; its full sequence is UDP-N-acetylglucosamine--N-acetylmuramyl-(pentapeptide) pyrophosphoryl-undecaprenol N-acetylglucosamine transferase (363 aa).

UDP-N-acetyl-alpha-D-glucosamine is bound by residues 12–14 (TAG), Arg-166, Ser-196, and Gln-291.

Belongs to the glycosyltransferase 28 family. MurG subfamily.

The protein resides in the cell inner membrane. The enzyme catalyses di-trans,octa-cis-undecaprenyl diphospho-N-acetyl-alpha-D-muramoyl-L-alanyl-D-glutamyl-meso-2,6-diaminopimeloyl-D-alanyl-D-alanine + UDP-N-acetyl-alpha-D-glucosamine = di-trans,octa-cis-undecaprenyl diphospho-[N-acetyl-alpha-D-glucosaminyl-(1-&gt;4)]-N-acetyl-alpha-D-muramoyl-L-alanyl-D-glutamyl-meso-2,6-diaminopimeloyl-D-alanyl-D-alanine + UDP + H(+). It participates in cell wall biogenesis; peptidoglycan biosynthesis. In terms of biological role, cell wall formation. Catalyzes the transfer of a GlcNAc subunit on undecaprenyl-pyrophosphoryl-MurNAc-pentapeptide (lipid intermediate I) to form undecaprenyl-pyrophosphoryl-MurNAc-(pentapeptide)GlcNAc (lipid intermediate II). The polypeptide is UDP-N-acetylglucosamine--N-acetylmuramyl-(pentapeptide) pyrophosphoryl-undecaprenol N-acetylglucosamine transferase (Legionella pneumophila (strain Paris)).